A 123-amino-acid chain; its full sequence is UPF0102 protein PputW619_0932 (123 aa).

This sequence belongs to the UPF0102 family.

The chain is UPF0102 protein PputW619_0932 from Pseudomonas putida (strain W619).